The following is a 123-amino-acid chain: Small ribosomal subunit protein bS6 (123 aa).

The tract at residues 102 to 123 is disordered; the sequence is MLKQKEERAPRREAEAKEFAAE. Residues 104–123 are compositionally biased toward basic and acidic residues; it reads KQKEERAPRREAEAKEFAAE.

Belongs to the bacterial ribosomal protein bS6 family.

Functionally, binds together with bS18 to 16S ribosomal RNA. The chain is Small ribosomal subunit protein bS6 from Vibrio vulnificus (strain CMCP6).